The sequence spans 861 residues: DNA mismatch repair protein MutS (861 aa).

Residue 618 to 625 participates in ATP binding; it reads GPNMGGKS.

The protein belongs to the DNA mismatch repair MutS family.

In terms of biological role, this protein is involved in the repair of mismatches in DNA. It is possible that it carries out the mismatch recognition step. This protein has a weak ATPase activity. In Shewanella frigidimarina (strain NCIMB 400), this protein is DNA mismatch repair protein MutS.